The sequence spans 260 residues: MKFLISPAKTLDLTSTPSIDTFSLPELLDESKELIDTIKPYSPADIASLMKLSDKLATLNVSRYQEWQKEHTRDNSRPAIYTFMGDVYTGLDAYSLNESDMKYAQKSLRILSGLYGLLKPLDLMQAYRLEMGTSLKNDRGSNLYQFWGDIIVDKINETLKEGELLVNLASNEYFKAVNKKKLTSPLISPNFLDEKNGKFKVISFYAKKARGLMARYLIENRCETLEELKAFDLAGYRYDPQQSTKDTPVFIRPESAEPKK.

This sequence belongs to the UPF0246 family.

This is UPF0246 protein Mmwyl1_3597 from Marinomonas sp. (strain MWYL1).